The chain runs to 261 residues: HLA class II histocompatibility antigen, DQ beta 1 chain (261 aa).

A signal peptide spans M1–G32. The interval R33–R126 is beta-1. Residues R33–K230 lie on the Extracellular side of the membrane. Intrachain disulfides connect C47–C111 and C149–C205. A glycan (N-linked (GlcNAc...) asparagine) is linked at N51. A beta-2 region spans residues V127–W220. Residues P129–T217 enclose the Ig-like C1-type domain. The interval R221–K230 is connecting peptide. A helical transmembrane segment spans residues M231–I251. Topologically, residues H252–H261 are cytoplasmic.

The protein belongs to the MHC class II family. Heterodimer of an alpha and a beta subunit; also referred as MHC class II molecule. In the endoplasmic reticulum (ER) it forms a heterononamer; 3 MHC class II molecules bind to a CD74 homotrimer (also known as invariant chain or HLA class II histocompatibility antigen gamma chain). In the endosomal/lysosomal system; CD74 undergoes sequential degradation by various proteases; leaving a small fragment termed CLIP on each MHC class II molecule. MHC class II molecule interacts with HLA_DM, and HLA_DO in B-cells, in order to release CLIP and facilitate the binding of antigenic peptides.

The protein localises to the cell membrane. It is found in the endoplasmic reticulum membrane. Its subcellular location is the golgi apparatus. The protein resides in the trans-Golgi network membrane. It localises to the endosome membrane. The protein localises to the lysosome membrane. In terms of biological role, binds peptides derived from antigens that access the endocytic route of antigen presenting cells (APC) and presents them on the cell surface for recognition by the CD4 T-cells. The peptide binding cleft accommodates peptides of 10-30 residues. The peptides presented by MHC class II molecules are generated mostly by degradation of proteins that access the endocytic route, where they are processed by lysosomal proteases and other hydrolases. Exogenous antigens that have been endocytosed by the APC are thus readily available for presentation via MHC II molecules, and for this reason this antigen presentation pathway is usually referred to as exogenous. As membrane proteins on their way to degradation in lysosomes as part of their normal turn-over are also contained in the endosomal/lysosomal compartments, exogenous antigens must compete with those derived from endogenous components. Autophagy is also a source of endogenous peptides, autophagosomes constitutively fuse with MHC class II loading compartments. In addition to APCs, other cells of the gastrointestinal tract, such as epithelial cells, express MHC class II molecules and CD74 and act as APCs, which is an unusual trait of the GI tract. To produce a MHC class II molecule that presents an antigen, three MHC class II molecules (heterodimers of an alpha and a beta chain) associate with a CD74 trimer in the ER to form a heterononamer. Soon after the entry of this complex into the endosomal/lysosomal system where antigen processing occurs, CD74 undergoes a sequential degradation by various proteases, including CTSS and CTSL, leaving a small fragment termed CLIP (class-II-associated invariant chain peptide). The removal of CLIP is facilitated by HLA-DM via direct binding to the alpha-beta-CLIP complex so that CLIP is released. HLA-DM stabilizes MHC class II molecules until primary high affinity antigenic peptides are bound. The MHC II molecule bound to a peptide is then transported to the cell membrane surface. In B-cells, the interaction between HLA-DM and MHC class II molecules is regulated by HLA-DO. Primary dendritic cells (DCs) also to express HLA-DO. Lysosomal microenvironment has been implicated in the regulation of antigen loading into MHC II molecules, increased acidification produces increased proteolysis and efficient peptide loading. The polypeptide is HLA class II histocompatibility antigen, DQ beta 1 chain (HLA-DQB1) (Homo sapiens (Human)).